The sequence spans 376 residues: 1-deoxy-D-xylulose 5-phosphate reductoisomerase (376 aa).

8 residues coordinate NADPH: S10, G11, S12, V13, G36, K37, N38, and N118. K119 contacts 1-deoxy-D-xylulose 5-phosphate. E120 is an NADPH binding site. Mn(2+) is bound at residue D144. The 1-deoxy-D-xylulose 5-phosphate site is built by S145, E146, S170, and H193. E146 contributes to the Mn(2+) binding site. Residue G199 participates in NADPH binding. S206, N211, K212, and E215 together coordinate 1-deoxy-D-xylulose 5-phosphate. E215 serves as a coordination point for Mn(2+).

This sequence belongs to the DXR family. It depends on Mg(2+) as a cofactor. The cofactor is Mn(2+).

It catalyses the reaction 2-C-methyl-D-erythritol 4-phosphate + NADP(+) = 1-deoxy-D-xylulose 5-phosphate + NADPH + H(+). The protein operates within isoprenoid biosynthesis; isopentenyl diphosphate biosynthesis via DXP pathway; isopentenyl diphosphate from 1-deoxy-D-xylulose 5-phosphate: step 1/6. In terms of biological role, catalyzes the NADPH-dependent rearrangement and reduction of 1-deoxy-D-xylulose-5-phosphate (DXP) to 2-C-methyl-D-erythritol 4-phosphate (MEP). In Macrococcus caseolyticus (strain JCSC5402) (Macrococcoides caseolyticum), this protein is 1-deoxy-D-xylulose 5-phosphate reductoisomerase.